A 249-amino-acid chain; its full sequence is tRNA (guanine-N(1)-)-methyltransferase (249 aa).

S-adenosyl-L-methionine contacts are provided by residues Gly-113 and 133 to 138 (IGDFVV).

This sequence belongs to the RNA methyltransferase TrmD family. Homodimer.

The protein localises to the cytoplasm. The catalysed reaction is guanosine(37) in tRNA + S-adenosyl-L-methionine = N(1)-methylguanosine(37) in tRNA + S-adenosyl-L-homocysteine + H(+). Functionally, specifically methylates guanosine-37 in various tRNAs. This chain is tRNA (guanine-N(1)-)-methyltransferase, found in Neisseria meningitidis serogroup C (strain 053442).